The chain runs to 234 residues: Transcription factor ILR3 (234 aa).

Residues 34–85 (QPIGVSSNSSAGVDGSAGNSEASKEPGSKKRGRCESSSATSSKACREKQRRD) are disordered. Residues 36-54 (IGVSSNSSAGVDGSAGNSE) are compositionally biased toward polar residues. One can recognise a bHLH domain in the interval 71–122 (SATSSKACREKQRRDRLNDKFMELGAILEPGNPPKTDKAAILVDAVRMVTQL).

In terms of assembly, homodimer. Interacts with BTS and BHLH47/PYE. As to expression, widely expressed throughout development, mostly in vasculatures.

The protein localises to the nucleus. Transcription factor. Plays a role in resistance to amide-linked indole-3-acetic acid (IAA) conjugates such as IAA-Leu and IAA-Phe. May regulate gene expression in response to metal homeostasis changes. The sequence is that of Transcription factor ILR3 (ILR3) from Arabidopsis thaliana (Mouse-ear cress).